The chain runs to 513 residues: Solute carrier family 2, facilitated glucose transporter member 10 (513 aa).

Residues 1-6 (MGCSVL) are Cytoplasmic-facing. The chain crosses the membrane as a helical span at residues 7–27 (LLTITVSTLGGLVFGYELGII). Residues 28-46 (SGALPQLQTHFSLGCVQQE) lie on the Extracellular side of the membrane. The chain crosses the membrane as a helical span at residues 47–67 (AVVSALLIGSLFASIIGGWLI). The Cytoplasmic portion of the chain corresponds to 68-80 (DRHGRRTSILLSN). A helical transmembrane segment spans residues 81-101 (LLILAGSVILTTGTSFFALVI). Topologically, residues 102–104 (GRA) are extracellular. The helical transmembrane segment at 105–125 (VIGFAMTVSSMSCCIFVSEMV) threads the bilayer. Topologically, residues 126–130 (TPERR) are cytoplasmic. Residues 131–151 (GLMVTLYEVGITVGILIAYAV) traverse the membrane as a helical segment. The Extracellular segment spans residues 152–164 (NYIFNNVPLTGWR). A helical membrane pass occupies residues 165–185 (YMFGFAIIPSLIQLASIVLLP). Residues 186-236 (KQAEVFVIHDDDSRQADRLTEETETSNQHQQSEKYGVSDLFKSKDNMRRRT) are Cytoplasmic-facing. A helical transmembrane segment spans residues 237–257 (VIGVGLVLSQQFTGQPNVLFY). A D-glucose-binding site is contributed by 246 to 247 (QQ). The Extracellular segment spans residues 258 to 272 (ASTILFSVGFQSNAS). N-linked (GlcNAc...) asparagine glycosylation occurs at N270. Residues 273–293 (AILASVGFGIVKVIATLLAML) form a helical membrane-spanning segment. Over 294–301 (CSDRAGRR) the chain is Cytoplasmic. Residues 302-322 (SLLIGGCSMLAVGLILTGFLC) form a helical membrane-spanning segment. The Extracellular portion of the chain corresponds to 323–376 (RQSVIDTTKRCTSVGPHSNLTLSAEHDEGVGFSSQTLDVHEHLRSFSQSEDIYK). N341 carries an N-linked (GlcNAc...) asparagine glycan. A helical membrane pass occupies residues 377 to 397 (WIIFTCLMAVVSAFSVSFGPM). Over 398–422 (TWVVLSEIFPKDIRGRAFSFINCFN) the chain is Cytoplasmic. D-glucose is bound at residue W399. A run of 2 helical transmembrane segments spans residues 423–443 (VGANLIVSFSFLSIIDVIGLS) and 444–464 (GVFLMYGVVGIAGVVFIYLVL). The Cytoplasmic portion of the chain corresponds to 465 to 513 (PETKGKSLQDIDRELSQTRMIHRQELCSIFQRRRFSPGYQRVQLTSTAT).

This sequence belongs to the major facilitator superfamily. Sugar transporter (TC 2.A.1.1) family. Glucose transporter subfamily.

It localises to the endomembrane system. Its subcellular location is the cytoplasm. The protein resides in the perinuclear region. The enzyme catalyses D-glucose(out) = D-glucose(in). In terms of biological role, facilitative glucose transporter required for the development of the cardiovascular system. In Danio rerio (Zebrafish), this protein is Solute carrier family 2, facilitated glucose transporter member 10.